A 62-amino-acid chain; its full sequence is Short neurotoxin 2 (62 aa).

Residues 1 to 20 (MTCYNQQSSEAKTTTTCSGG) form a disordered region. 4 disulfides stabilise this stretch: C3/C24, C17/C41, C43/C54, and C55/C60.

It belongs to the three-finger toxin family. Short-chain subfamily. Type I alpha-neurotoxin sub-subfamily. Expressed by the venom gland.

It localises to the secreted. Binds to muscle nicotinic acetylcholine receptor (nAChR) and inhibit acetylcholine from binding to the receptor, thereby impairing neuromuscular transmission. This is Short neurotoxin 2 from Oxyuranus scutellatus scutellatus (Australian taipan).